A 132-amino-acid polypeptide reads, in one-letter code: MKSLSVSLVVLWLLLNWVNSQQNVQQSPESLIVPEGARTSLNCTFSDSASQYFWWYRQHSGKAPKALMSIFSNGEKEEGRFTIHLNKASLHFSLHIRDSQPSDSALYLCAVTLYGGSGNKLIFGTGTLLSVK.

Residues 1–20 (MKSLSVSLVVLWLLLNWVNS) form the signal peptide. The interval 21–113 (QQNVQQSPES…SALYLCAVTL (93 aa)) is v segment. Asparagine 42 carries N-linked (GlcNAc...) asparagine glycosylation. The tract at residues 114-117 (YGGS) is d segment. A j segment region spans residues 118-132 (GNKLIFGTGTLLSVK).

The polypeptide is T-cell receptor alpha chain V region 2B4 (Mus musculus (Mouse)).